The chain runs to 391 residues: Aminoacetone oxidase (391 aa).

FAD is bound by residues Ala-14, Glu-33, Ile-134, Glu-362, Asn-374, and Ile-375.

This sequence belongs to the BaiN/RdsA family. Monomer. It depends on FAD as a cofactor.

Its function is as follows. Flavoprotein that probably catalyzes the condensation of two molecules of aminoacetone to yield 3,6-dimethyl-2,5-dihydropyrazine, which is subsequently oxidized to 2,5-dimethylpyrazine. It could be involved in a microbial defense mechanism related to aminoacetone catabolism through a pathway yielding dimethylpyrazine derivatives instead of methylglyoxal. It has also low aminoacetone oxidase activity, and can produce hydrogen peroxide from aminoacetone. In addition, it shows very low L-amino acid oxidase activity, and can produce hydrogen peroxide from peptone and from seven amino acids, L-aspartate, L-tryptophan, L-lysine, L-isoleucine, L-arginine, L-asparagine and L-glutamine. It cannot use L-malate, oxaloacetate or alpha-aminobutyrate. Plays a role in antioxidant defense. This is Aminoacetone oxidase from Streptococcus cristatus.